The sequence spans 311 residues: Ribosomal RNA small subunit methyltransferase H (311 aa).

S-adenosyl-L-methionine is bound by residues 32-34 (AGH), aspartate 52, phenylalanine 79, aspartate 100, and glutamine 107. Residues 289-298 (SKEELEENNR) show a composition bias toward basic and acidic residues. The interval 289–311 (SKEELEENNRARSAKLRIAEKRK) is disordered. The span at 300-311 (RSAKLRIAEKRK) shows a compositional bias: basic residues.

Belongs to the methyltransferase superfamily. RsmH family.

It is found in the cytoplasm. It catalyses the reaction cytidine(1402) in 16S rRNA + S-adenosyl-L-methionine = N(4)-methylcytidine(1402) in 16S rRNA + S-adenosyl-L-homocysteine + H(+). Its function is as follows. Specifically methylates the N4 position of cytidine in position 1402 (C1402) of 16S rRNA. This Bacillus velezensis (strain DSM 23117 / BGSC 10A6 / LMG 26770 / FZB42) (Bacillus amyloliquefaciens subsp. plantarum) protein is Ribosomal RNA small subunit methyltransferase H.